A 324-amino-acid polypeptide reads, in one-letter code: Mating-type protein A-3 (324 aa).

The HMG box DNA-binding region spans 147–215 (TSRPRNQFVL…RHRAENPHLY (69 aa)).

It is found in the nucleus. Its function is as follows. Required, together with mating-type protein A-2, for efficient ascospore formation. The chain is Mating-type protein A-3 (mtA-3) from Neurospora crassa (strain ATCC 24698 / 74-OR23-1A / CBS 708.71 / DSM 1257 / FGSC 987).